We begin with the raw amino-acid sequence, 89 residues long: Small ribosomal subunit protein uS15 (89 aa).

It belongs to the universal ribosomal protein uS15 family. Part of the 30S ribosomal subunit. Forms a bridge to the 50S subunit in the 70S ribosome, contacting the 23S rRNA.

In terms of biological role, one of the primary rRNA binding proteins, it binds directly to 16S rRNA where it helps nucleate assembly of the platform of the 30S subunit by binding and bridging several RNA helices of the 16S rRNA. Functionally, forms an intersubunit bridge (bridge B4) with the 23S rRNA of the 50S subunit in the ribosome. In Syntrophomonas wolfei subsp. wolfei (strain DSM 2245B / Goettingen), this protein is Small ribosomal subunit protein uS15.